Here is a 79-residue protein sequence, read N- to C-terminus: Large ribosomal subunit protein bL28 (79 aa).

Belongs to the bacterial ribosomal protein bL28 family.

The sequence is that of Large ribosomal subunit protein bL28 from Christiangramia forsetii (strain DSM 17595 / CGMCC 1.15422 / KT0803) (Gramella forsetii).